Reading from the N-terminus, the 106-residue chain is Small ribosomal subunit protein uS10 (106 aa).

Belongs to the universal ribosomal protein uS10 family. As to quaternary structure, part of the 30S ribosomal subunit.

Involved in the binding of tRNA to the ribosomes. The chain is Small ribosomal subunit protein uS10 from Wolbachia sp. subsp. Drosophila simulans (strain wRi).